The sequence spans 245 residues: UDP-2,3-diacylglucosamine hydrolase (245 aa).

The Mn(2+) site is built by aspartate 8, histidine 10, aspartate 41, asparagine 80, and histidine 115. Residue 80–81 (NR) coordinates substrate. Substrate is bound by residues aspartate 123, serine 161, lysine 165, lysine 168, and histidine 196. Histidine 196 and histidine 198 together coordinate Mn(2+).

It belongs to the LpxH family. The cofactor is Mn(2+).

The protein localises to the cell inner membrane. The enzyme catalyses UDP-2-N,3-O-bis[(3R)-3-hydroxytetradecanoyl]-alpha-D-glucosamine + H2O = 2-N,3-O-bis[(3R)-3-hydroxytetradecanoyl]-alpha-D-glucosaminyl 1-phosphate + UMP + 2 H(+). The protein operates within glycolipid biosynthesis; lipid IV(A) biosynthesis; lipid IV(A) from (3R)-3-hydroxytetradecanoyl-[acyl-carrier-protein] and UDP-N-acetyl-alpha-D-glucosamine: step 4/6. In terms of biological role, hydrolyzes the pyrophosphate bond of UDP-2,3-diacylglucosamine to yield 2,3-diacylglucosamine 1-phosphate (lipid X) and UMP by catalyzing the attack of water at the alpha-P atom. Involved in the biosynthesis of lipid A, a phosphorylated glycolipid that anchors the lipopolysaccharide to the outer membrane of the cell. The protein is UDP-2,3-diacylglucosamine hydrolase of Psychromonas ingrahamii (strain DSM 17664 / CCUG 51855 / 37).